A 412-amino-acid chain; its full sequence is NF-kappa-B essential modulator (412 aa).

A disordered region spans residues 1–48 (MNKHPWKNQLSEMVQPSGGPAEDQDMLGEESSLGKPAMLHLPSEQGTP). Residues 1–197 (MNKHPWKNQL…REVLQQQHSV (197 aa)) are required for interaction with and ubiquitination by MARCHF2. 2 positions are modified to phosphoserine; by IKKB: Ser-31 and Ser-43. The segment at 44–111 (EQGTPETLQR…KLVERLSLEK (68 aa)) is interaction with CHUK/IKBKB. Residues 49–345 (ETLQRCLEEN…LKVGCHESAR (297 aa)) adopt a coiled-coil conformation. Ser-68 carries the post-translational modification Phosphoserine. The residue at position 85 (Ser-85) is a Phosphoserine; by ATM. Residues Lys-111, Lys-139, Lys-143, Lys-226, and Lys-246 each participate in a glycyl lysine isopeptide (Lys-Gly) (interchain with G-Cter in ubiquitin) cross-link. Residues 150–250 (LGELQESQSR…YDSHIKSSKG (101 aa)) are interaction with TANK. A ubiquitin-binding (UBAN) region spans residues 242–343 (DSHIKSSKGM…NKLKVGCHES (102 aa)). Residues 246–358 (KSSKGMQLED…MRKRHVETPQ (113 aa)) are self-association. The segment at 249–412 (KGMQLEDLRQ…LQIHVMECIE (164 aa)) is required for interaction with TNFAIP3. The linear polyubiquitin-binding, does not bind to 'Lys-63'-linked polyubiquitin stretch occupies residues 250 to 339 (GMQLEDLRQQ…QREFNKLKVG (90 aa)). A Glycyl lysine isopeptide (Lys-Gly) (interchain with G-Cter in SUMO); alternate cross-link involves residue Lys-270. Residue Lys-270 forms a Glycyl lysine isopeptide (Lys-Gly) (interchain with G-Cter in ubiquitin); alternate linkage. Residues Lys-276, Lys-278, Lys-285, and Lys-295 each participate in a glycyl lysine isopeptide (Lys-Gly) (interchain with G-Cter in ubiquitin) cross-link. Lys-302 is covalently cross-linked (Glycyl lysine isopeptide (Lys-Gly) (interchain with G-Cter in SUMO); alternate). Residue Lys-302 forms a Glycyl lysine isopeptide (Lys-Gly) (interchain with G-Cter in ubiquitin); alternate linkage. Glycyl lysine isopeptide (Lys-Gly) (interchain with G-Cter in ubiquitin) cross-links involve residues Lys-314, Lys-318, and Lys-319. The leucine-zipper stretch occupies residues 315 to 336 (LVEKKEYLQEQLEQLQREFNKL). Residue Ser-369 is modified to Phosphoserine; by IKKB. Positions 375–412 (SNQRRSPPEEPPDFCCPKCQYQAPDMDTLQIHVMECIE) are interaction with CYLD. Phosphoserine is present on Ser-380. A CCHC NOA-type zinc finger spans residues 382-412 (PEEPPDFCCPKCQYQAPDMDTLQIHVMECIE). Cys-390 serves as a coordination point for Zn(2+). Residue Lys-392 forms a Glycyl lysine isopeptide (Lys-Gly) (interchain with G-Cter in ubiquitin) linkage. Zn(2+) contacts are provided by Cys-393, His-406, and Cys-410.

As to quaternary structure, homodimer; disulfide-linked. Component of the I-kappa-B-kinase (IKK) core complex consisting of CHUK, IKBKB and IKBKG; probably four alpha/CHUK-beta/IKBKB dimers are associated with four gamma/IKBKG subunits. The IKK core complex seems to associate with regulatory or adapter proteins to form a IKK-signalosome holo-complex. The IKK complex associates with TERF2IP/RAP1, leading to promote IKK-mediated phosphorylation of RELA/p65. Part of a complex composed of NCOA2, NCOA3, CHUK/IKKA, IKBKB, IKBKG and CREBBP. Interacts with COPS3, CYLD, NALP2, TRPC4AP and PIDD1. Interacts with ATM; the complex is exported from the nucleus. Interacts with TRAF6. Interacts with IKBKE. Interacts with TANK; the interaction is enhanced by IKBKE and TBK1. Part of a ternary complex consisting of TANK, IKBKB and IKBKG. Interacts with ZFAND5. Interacts with RIPK2. Interacts with TNIP1 and TNFAIP3; TNIP1 facilitates the TNFAIP3-mediated de-ubiquitination of IKBKG. Interacts with TNFAIP3; the interaction is induced by TNF stimulation and by polyubiquitin. Binds (via UBAN region) polyubiquitin; binds both 'Lys-63'-linked and linear polyubiquitin, with higher affinity for linear ubiquitin. Interacts with NLRP10. Interacts with TANK; this interaction increases in response to DNA damage. Interacts with USP10; this interaction increases in response to DNA damage. Interacts with ZC3H12A; this interaction increases in response to DNA damage. Interacts with IFIT5; the interaction synergizes the recruitment of IKK to MAP3K7 and enhances IKK phosphorylation. Interacts with TRIM29; this interaction induces IKBKG/NEMO ubiquitination and proteolytic degradation. Interacts with TRIM13; this interaction leads to IKBKG/NEMO ubiquitination. Interacts with ARFIP2. Interacts with RIPK1. Interacts with (ubiquitinated) BCL10; interaction with polyubiquitinated BCL10 via both 'Lys-63'-linked and linear ubiquitin is required for TCR-induced NF-kappa-B activation. Interacts with MARCHF2; during the late stages of macrophage viral and bacterial infection; the interaction leads to ubiquitination and degradation of IKBKG/NEMO. Phosphorylation at Ser-68 attenuates aminoterminal homodimerization. In terms of processing, polyubiquitinated on Lys-278 via 'Lys-63'-linked ubiquitin; the ubiquitination is mediated downstream of NOD2 and RIPK2 and probably plays a role in signaling by facilitating interactions with ubiquitin domain-containing proteins and activates the NF-kappa-B pathway. Polyubiquitinated on Lys-278 and Lys-302 through 'Lys-63'-linked ubiquitin; the ubiquitination is mediated by BCL10, MALT1 and TRAF6 and probably plays a role in signaling by facilitating interactions with ubiquitin domain-containing proteins and activates the NF-kappa-B pathway. Monoubiquitinated on Lys-270 and Lys-302; promotes nuclear export. Polyubiquitinated through 'Lys-27' by TRIM23; involved in antiviral innate and inflammatory responses. Linear polyubiquitinated on Lys-111, Lys-143, Lys-226, Lys-246, Lys-270, Lys-278, Lys-285, Lys-295, Lys-302 and Lys-319; the head-to-tail polyubiquitination is mediated by the LUBAC complex and plays a key role in NF-kappa-B activation. Deubiquitinated by USP10 in a TANK-dependent and -independent manner, leading to the negative regulation of NF-kappa-B signaling upon DNA damage. Ubiquitinated at Lys-319 by MARCHF2 following bacterial and viral infection which leads to its degradation. Polyubiquitinated via 'Lys-29'-linked ubiquitin; leading to lysosomal degradation. Post-translationally, sumoylated on Lys-270 and Lys-302 with SUMO1; the modification results in phosphorylation of Ser-85 by ATM leading to a replacement of the sumoylation by mono-ubiquitination on these residues. Neddylated by TRIM40, resulting in stabilization of NFKBIA and down-regulation of NF-kappa-B activity.

It localises to the cytoplasm. The protein resides in the nucleus. Regulatory subunit of the IKK core complex which phosphorylates inhibitors of NF-kappa-B thus leading to the dissociation of the inhibitor/NF-kappa-B complex and ultimately the degradation of the inhibitor. Its binding to scaffolding polyubiquitin plays a key role in IKK activation by multiple signaling receptor pathways. Can recognize and bind both 'Lys-63'-linked and linear polyubiquitin upon cell stimulation, with a much highr affinity for linear polyubiquitin. Could be implicated in NF-kappa-B-mediated protection from cytokine toxicity. Essential for viral activation of IRF3. Involved in TLR3- and IFIH1-mediated antiviral innate response; this function requires 'Lys-27'-linked polyubiquitination. The sequence is that of NF-kappa-B essential modulator (Ikbkg) from Mus musculus (Mouse).